Consider the following 400-residue polypeptide: CCA-adding enzyme (400 aa).

Positions 28 and 31 each coordinate ATP. 2 residues coordinate CTP: Gly28 and Arg31. Residues Asp41 and Asp43 each coordinate Mg(2+). ATP is bound by residues Arg112, Asp155, Arg158, Arg161, and Arg164. Arg112, Asp155, Arg158, Arg161, and Arg164 together coordinate CTP.

Belongs to the tRNA nucleotidyltransferase/poly(A) polymerase family. Bacterial CCA-adding enzyme type 3 subfamily. As to quaternary structure, homodimer. The cofactor is Mg(2+).

The enzyme catalyses a tRNA precursor + 2 CTP + ATP = a tRNA with a 3' CCA end + 3 diphosphate. It catalyses the reaction a tRNA with a 3' CCA end + 2 CTP + ATP = a tRNA with a 3' CCACCA end + 3 diphosphate. Catalyzes the addition and repair of the essential 3'-terminal CCA sequence in tRNAs without using a nucleic acid template. Adds these three nucleotides in the order of C, C, and A to the tRNA nucleotide-73, using CTP and ATP as substrates and producing inorganic pyrophosphate. tRNA 3'-terminal CCA addition is required both for tRNA processing and repair. Also involved in tRNA surveillance by mediating tandem CCA addition to generate a CCACCA at the 3' terminus of unstable tRNAs. While stable tRNAs receive only 3'-terminal CCA, unstable tRNAs are marked with CCACCA and rapidly degraded. In Staphylococcus aureus (strain MRSA252), this protein is CCA-adding enzyme.